We begin with the raw amino-acid sequence, 277 residues long: Shikimate dehydrogenase (NADP(+)) (277 aa).

Shikimate contacts are provided by residues 15–17 (SLS) and threonine 62. Lysine 66 serves as the catalytic Proton acceptor. Shikimate contacts are provided by asparagine 87 and aspartate 102. NADP(+) is bound by residues 127-131 (GAGGA), 151-156 (NRTVDK), and isoleucine 219. Tyrosine 221 is a binding site for shikimate. Glycine 242 contributes to the NADP(+) binding site.

Belongs to the shikimate dehydrogenase family. Homodimer.

It carries out the reaction shikimate + NADP(+) = 3-dehydroshikimate + NADPH + H(+). Its pathway is metabolic intermediate biosynthesis; chorismate biosynthesis; chorismate from D-erythrose 4-phosphate and phosphoenolpyruvate: step 4/7. In terms of biological role, involved in the biosynthesis of the chorismate, which leads to the biosynthesis of aromatic amino acids. Catalyzes the reversible NADPH linked reduction of 3-dehydroshikimate (DHSA) to yield shikimate (SA). This is Shikimate dehydrogenase (NADP(+)) from Bacillus anthracis (strain CDC 684 / NRRL 3495).